Here is a 107-residue protein sequence, read N- to C-terminus: MAEAAHGGGLRGRGVLLGGVQDAPAGRENDLETIELARFAVAEHNAKANALLEFEKLVKVRQQVVAGCMHYFTIEVKEGGAKKLYEAKVWEKAWENFKQLQEFKPAA.

One can recognise a Cystatin domain in the interval 18–107 (GGVQDAPAGR…KQLQEFKPAA (90 aa)). The Secondary area of contact motif lies at 63-67 (QVVAG).

The protein belongs to the cystatin family. Phytocystatin subfamily. Expressed in embryos, developing endosperms, leaves, roots, flowers and pollen grains.

In terms of biological role, inhibits papain, ficin, cathepsin B and, to a lesser extent, chymopapain, but is inactive against bromelain. Inhibits the growth of pathogenic fungi. Regulated by the DOF transcription factors SAD (activator) and BPBF (repressor). The sequence is that of Cysteine proteinase inhibitor (ICY) from Hordeum vulgare (Barley).